The primary structure comprises 397 residues: CCA-adding enzyme (397 aa).

ATP contacts are provided by glycine 26 and arginine 29. Residues glycine 26 and arginine 29 each coordinate CTP. Residues aspartate 39 and aspartate 41 each coordinate Mg(2+). The ATP site is built by arginine 110, aspartate 153, arginine 156, arginine 159, and arginine 162. CTP contacts are provided by arginine 110, aspartate 153, arginine 156, arginine 159, and arginine 162.

Belongs to the tRNA nucleotidyltransferase/poly(A) polymerase family. Bacterial CCA-adding enzyme type 3 subfamily. As to quaternary structure, homodimer. Requires Mg(2+) as cofactor.

It catalyses the reaction a tRNA precursor + 2 CTP + ATP = a tRNA with a 3' CCA end + 3 diphosphate. It carries out the reaction a tRNA with a 3' CCA end + 2 CTP + ATP = a tRNA with a 3' CCACCA end + 3 diphosphate. Functionally, catalyzes the addition and repair of the essential 3'-terminal CCA sequence in tRNAs without using a nucleic acid template. Adds these three nucleotides in the order of C, C, and A to the tRNA nucleotide-73, using CTP and ATP as substrates and producing inorganic pyrophosphate. tRNA 3'-terminal CCA addition is required both for tRNA processing and repair. Also involved in tRNA surveillance by mediating tandem CCA addition to generate a CCACCA at the 3' terminus of unstable tRNAs. While stable tRNAs receive only 3'-terminal CCA, unstable tRNAs are marked with CCACCA and rapidly degraded. In Bacillus cereus (strain Q1), this protein is CCA-adding enzyme.